The chain runs to 426 residues: D-tagatose-1,6-bisphosphate aldolase subunit KbaZ (426 aa).

This sequence belongs to the GatZ/KbaZ family. KbaZ subfamily. As to quaternary structure, forms a complex with KbaY.

Its pathway is carbohydrate metabolism; D-tagatose 6-phosphate degradation; D-glyceraldehyde 3-phosphate and glycerone phosphate from D-tagatose 6-phosphate: step 2/2. In terms of biological role, component of the tagatose-1,6-bisphosphate aldolase KbaYZ that is required for full activity and stability of the Y subunit. Could have a chaperone-like function for the proper and stable folding of KbaY. When expressed alone, KbaZ does not show any aldolase activity. This Escherichia coli O81 (strain ED1a) protein is D-tagatose-1,6-bisphosphate aldolase subunit KbaZ.